A 340-amino-acid polypeptide reads, in one-letter code: MSSTALIHDDEALEPTLQSILDQKTLRWIFVGGKGGVGKTTTSCSLAIQLSKVRKSVLLISTDPAHNLSDAFGQKFGKEARLVDGFTNLSAMEIDPNGSIQDLLASGGEAQDDPLAGLGMGGMMQDLAFSIPGVDEAMSFAEVLKQVKSLSYEVIVFDTAPTGHTLRFLQFPTVLEKALAKLSQLSGQFGPMLNSILGSRGGLPGGQNLDDLMSKMESLRETISEVNTQFKNADMTTFVCVCIAEFLSLYETERMIQELTGYSIDTHAIVVNQLLFPKKDNPCEQCNARRKMQKKYLEQIEELYEDFNVVRMPLLVEEVRGKEKLEKFSEMLVKPYVPPE.

34–41 (KGGVGKTT) is a binding site for ATP. D63 is an active-site residue. Positions 245 and 272 each coordinate ATP. 2 residues coordinate Zn(2+): C283 and C286.

This sequence belongs to the arsA ATPase family. Homodimer.

The protein localises to the cytoplasm. It localises to the endoplasmic reticulum. Its function is as follows. ATPase required for the post-translational delivery of tail-anchored (TA) proteins to the endoplasmic reticulum. Recognizes and selectively binds the transmembrane domain of TA proteins in the cytosol. This complex then targets to the endoplasmic reticulum by membrane-bound receptors, where the tail-anchored protein is released for insertion. This process is regulated by ATP binding and hydrolysis. ATP binding drives the homodimer towards the closed dimer state, facilitating recognition of newly synthesized TA membrane proteins. ATP hydrolysis is required for insertion. Subsequently, the homodimer reverts towards the open dimer state, lowering its affinity for the membrane-bound receptor, and returning it to the cytosol to initiate a new round of targeting. This is ATPase get3 (get3) from Talaromyces stipitatus (strain ATCC 10500 / CBS 375.48 / QM 6759 / NRRL 1006) (Penicillium stipitatum).